The following is a 129-amino-acid chain: Small ribosomal subunit protein uS12 (129 aa).

The disordered stretch occupies residues 110–129 (RKQGRSRYGAHRKQVAATKK).

It belongs to the universal ribosomal protein uS12 family. Part of the 30S ribosomal subunit. Contacts proteins S8 and S17. May interact with IF1 in the 30S initiation complex.

With S4 and S5 plays an important role in translational accuracy. In terms of biological role, interacts with and stabilizes bases of the 16S rRNA that are involved in tRNA selection in the A site and with the mRNA backbone. Located at the interface of the 30S and 50S subunits, it traverses the body of the 30S subunit contacting proteins on the other side and probably holding the rRNA structure together. The combined cluster of proteins S8, S12 and S17 appears to hold together the shoulder and platform of the 30S subunit. In Rickettsia prowazekii (strain Madrid E), this protein is Small ribosomal subunit protein uS12.